Reading from the N-terminus, the 445-residue chain is 3-phosphoshikimate 1-carboxyvinyltransferase (445 aa).

3 residues coordinate 3-phosphoshikimate: Lys-25, Ser-26, and Arg-30. Lys-25 serves as a coordination point for phosphoenolpyruvate. 2 residues coordinate phosphoenolpyruvate: Gly-98 and Arg-126. Residues Ser-171, Gln-173, Asp-324, and Lys-351 each contribute to the 3-phosphoshikimate site. Gln-173 serves as a coordination point for phosphoenolpyruvate. The Proton acceptor role is filled by Asp-324. Arg-355 and Arg-398 together coordinate phosphoenolpyruvate.

This sequence belongs to the EPSP synthase family. In terms of assembly, monomer.

It is found in the cytoplasm. It catalyses the reaction 3-phosphoshikimate + phosphoenolpyruvate = 5-O-(1-carboxyvinyl)-3-phosphoshikimate + phosphate. Its pathway is metabolic intermediate biosynthesis; chorismate biosynthesis; chorismate from D-erythrose 4-phosphate and phosphoenolpyruvate: step 6/7. Catalyzes the transfer of the enolpyruvyl moiety of phosphoenolpyruvate (PEP) to the 5-hydroxyl of shikimate-3-phosphate (S3P) to produce enolpyruvyl shikimate-3-phosphate and inorganic phosphate. This chain is 3-phosphoshikimate 1-carboxyvinyltransferase, found in Hydrogenovibrio crunogenus (strain DSM 25203 / XCL-2) (Thiomicrospira crunogena).